The chain runs to 242 residues: UPF0246 protein SPP_1571 (242 aa).

It belongs to the UPF0246 family.

This chain is UPF0246 protein SPP_1571, found in Streptococcus pneumoniae (strain P1031).